Consider the following 274-residue polypeptide: Dermonecrotic toxin SdSicTox-betaIIB2ii (274 aa).

His5 is a catalytic residue. Residues Glu25 and Asp27 each contribute to the Mg(2+) site. The Nucleophile role is filled by His41. Intrachain disulfides connect Cys45-Cys51 and Cys47-Cys190. Asp85 is a Mg(2+) binding site.

This sequence belongs to the arthropod phospholipase D family. Class II subfamily. Requires Mg(2+) as cofactor. In terms of tissue distribution, expressed by the venom gland.

It localises to the secreted. The enzyme catalyses an N-(acyl)-sphingosylphosphocholine = an N-(acyl)-sphingosyl-1,3-cyclic phosphate + choline. It carries out the reaction an N-(acyl)-sphingosylphosphoethanolamine = an N-(acyl)-sphingosyl-1,3-cyclic phosphate + ethanolamine. The catalysed reaction is a 1-acyl-sn-glycero-3-phosphocholine = a 1-acyl-sn-glycero-2,3-cyclic phosphate + choline. It catalyses the reaction a 1-acyl-sn-glycero-3-phosphoethanolamine = a 1-acyl-sn-glycero-2,3-cyclic phosphate + ethanolamine. Its function is as follows. Dermonecrotic toxins cleave the phosphodiester linkage between the phosphate and headgroup of certain phospholipids (sphingolipid and lysolipid substrates), forming an alcohol (often choline) and a cyclic phosphate. This toxin acts on sphingomyelin (SM). It may also act on ceramide phosphoethanolamine (CPE), lysophosphatidylcholine (LPC) and lysophosphatidylethanolamine (LPE), but not on lysophosphatidylserine (LPS), and lysophosphatidylglycerol (LPG). It acts by transphosphatidylation, releasing exclusively cyclic phosphate products as second products. Induces dermonecrosis, hemolysis, increased vascular permeability, edema, inflammatory response, and platelet aggregation. In Sicarius cf. damarensis (strain GJB-2008) (Six-eyed sand spider), this protein is Dermonecrotic toxin SdSicTox-betaIIB2ii.